We begin with the raw amino-acid sequence, 73 residues long: DNA-directed RNA polymerase subunit omega (73 aa).

Belongs to the RNA polymerase subunit omega family. In terms of assembly, the RNAP catalytic core consists of 2 alpha, 1 beta, 1 beta' and 1 omega subunit. When a sigma factor is associated with the core the holoenzyme is formed, which can initiate transcription.

It carries out the reaction RNA(n) + a ribonucleoside 5'-triphosphate = RNA(n+1) + diphosphate. Functionally, promotes RNA polymerase assembly. Latches the N- and C-terminal regions of the beta' subunit thereby facilitating its interaction with the beta and alpha subunits. This is DNA-directed RNA polymerase subunit omega from Lactobacillus delbrueckii subsp. bulgaricus (strain ATCC BAA-365 / Lb-18).